The primary structure comprises 657 residues: Methylenetetrahydrofolate reductase 1 (657 aa).

The Proton donor/acceptor role is filled by Glu-18. Residues 18-23 (EFFPPK) and 49-50 (TW) contribute to the NAD(+) site. Residues 49 to 50 (TW), His-78, and 108 to 110 (RGD) each bind FAD. Residue Asp-110 coordinates substrate. At Ser-120 the chain carries Phosphoserine. Residues 129 to 130 (YA), Tyr-152, Asp-171, and Lys-178 each bind FAD. 2 residues coordinate substrate: Gln-189 and Tyr-286. Phosphoserine is present on Ser-301. Residues 308–329 (VNESSEEEGEDETSGEIGSIEN) form a disordered region. Over residues 311-321 (SSEEEGEDETS) the composition is skewed to acidic residues. The residue at position 358 (Ser-358) is a Phosphoserine.

Belongs to the methylenetetrahydrofolate reductase family. Requires FAD as cofactor.

The enzyme catalyses (6S)-5-methyl-5,6,7,8-tetrahydrofolate + NADP(+) = (6R)-5,10-methylene-5,6,7,8-tetrahydrofolate + NADPH + H(+). It carries out the reaction (6S)-5-methyl-5,6,7,8-tetrahydrofolate + NAD(+) = (6R)-5,10-methylene-5,6,7,8-tetrahydrofolate + NADH + H(+). The protein operates within one-carbon metabolism; tetrahydrofolate interconversion. This chain is Methylenetetrahydrofolate reductase 1 (MET12), found in Saccharomyces cerevisiae (strain ATCC 204508 / S288c) (Baker's yeast).